A 193-amino-acid chain; its full sequence is dCTP deaminase (193 aa).

DCTP-binding positions include 110 to 115, Asp128, 136 to 138, Tyr171, Lys178, and Gln182; these read RSSLAR and VLE. The active-site Proton donor/acceptor is the Glu138.

This sequence belongs to the dCTP deaminase family. As to quaternary structure, homotrimer.

It catalyses the reaction dCTP + H2O + H(+) = dUTP + NH4(+). Its pathway is pyrimidine metabolism; dUMP biosynthesis; dUMP from dCTP (dUTP route): step 1/2. Catalyzes the deamination of dCTP to dUTP. This chain is dCTP deaminase, found in Buchnera aphidicola subsp. Baizongia pistaciae (strain Bp).